Here is a 248-residue protein sequence, read N- to C-terminus: DNA repair protein RecO (248 aa).

The protein belongs to the RecO family.

Functionally, involved in DNA repair and RecF pathway recombination. The sequence is that of DNA repair protein RecO from Bacillus cytotoxicus (strain DSM 22905 / CIP 110041 / 391-98 / NVH 391-98).